Here is a 138-residue protein sequence, read N- to C-terminus: Putative pre-16S rRNA nuclease (138 aa).

Belongs to the YqgF nuclease family.

The protein localises to the cytoplasm. Its function is as follows. Could be a nuclease involved in processing of the 5'-end of pre-16S rRNA. This is Putative pre-16S rRNA nuclease from Glaesserella parasuis serovar 5 (strain SH0165) (Haemophilus parasuis).